The chain runs to 652 residues: Chaperone protein HtpG (652 aa).

Residues 1-348 (MATDAHKETL…SDDLPLNVSR (348 aa)) are a; substrate-binding. The interval 349-565 (ELLQHNPLLD…EYDFGMGMQR (217 aa)) is b. Positions 566–652 (LLKAAGHAMP…EAKSNAARGD (87 aa)) are c.

It belongs to the heat shock protein 90 family. Homodimer.

Its subcellular location is the cytoplasm. In terms of biological role, molecular chaperone. Has ATPase activity. The chain is Chaperone protein HtpG from Alkalilimnicola ehrlichii (strain ATCC BAA-1101 / DSM 17681 / MLHE-1).